The chain runs to 633 residues: Extracellular metalloproteinase 3 (633 aa).

The N-terminal stretch at 1–18 (MHGLLLAGLLALPMNVLA) is a signal peptide. Residues 19–246 (HPAEQHASNV…VHNVVDYVAS (228 aa)) constitute a propeptide that is removed on maturation. N410 is a glycosylation site (N-linked (GlcNAc...) asparagine). A Zn(2+)-binding site is contributed by H429. E430 is an active-site residue. H433 serves as a coordination point for Zn(2+). N-linked (GlcNAc...) asparagine glycans are attached at residues N480 and N622.

This sequence belongs to the peptidase M36 family. Zn(2+) serves as cofactor.

The protein resides in the secreted. Its function is as follows. Secreted metalloproteinase probably acting as a virulence factor. This chain is Extracellular metalloproteinase 3 (MEP3), found in Trichophyton equinum (Horse ringworm fungus).